The chain runs to 224 residues: Artemin (224 aa).

An N-terminal signal peptide occupies residues 1–39 (MELGLAEPTALSHCLRPRWQSAWWPTLAVLALLSCVTEA). Residues 40-111 (SLDPMSRSPA…AALRGARAAR (72 aa)) constitute a propeptide that is removed on maturation. The disordered stretch occupies residues 43–124 (PMSRSPAARD…RSSRARTTDA (82 aa)). Over residues 80 to 95 (RPPPQSPQPAPPPPGP) the composition is skewed to pro residues. Low complexity predominate over residues 96 to 116 (ALQSPPAALRGARAARAGTRS). Intrachain disulfides connect Cys127/Cys192, Cys154/Cys220, and Cys158/Cys222. Asn206 carries N-linked (GlcNAc...) asparagine glycosylation.

Belongs to the TGF-beta family. GDNF subfamily. Homodimer; disulfide-linked. Interacts with GFRA3 coreceptor and RET: forms a 2:2:2 ternary complex composed of ARTN ligand, GFRA3 and RET receptor.

The protein resides in the secreted. Its function is as follows. Growth factor that supports the survival of sensory and sympathetic peripheral neurons in culture and also supports the survival of dopaminergic neurons of the ventral mid-brain. Acts by binding to its coreceptor, GFRA3, leading to autophosphorylation and activation of the RET receptor. Strong attractant of gut hematopoietic cells thus promoting the formation Peyer's patch-like structures, a major component of the gut-associated lymphoid tissue. In Mus musculus (Mouse), this protein is Artemin.